The primary structure comprises 168 residues: Disulfide bond formation protein B 2 (168 aa).

At 1 to 9 (MLPARLRTF) the chain is on the cytoplasmic side. The chain crosses the membrane as a helical span at residues 10–26 (FLPACLVALAVLVASFR). Residues 27–44 (LENTVGLMPCPLCLSQRL) are Periplasmic-facing. Cys36 and Cys39 are joined by a disulfide. The helical transmembrane segment at 45-61 (LLGGYALLCFAAVLQAP) threads the bilayer. Topologically, residues 62–67 (GTRGIL) are cytoplasmic. The chain crosses the membrane as a helical span at residues 68 to 85 (RYARLALGCSLAGALLAA). At 86–140 (RHVWLQGAEGVNEVCPVPIGRVFEQSWSEAARQLLLGGPDCRSLAWSFLDLTLPE) the chain is on the periplasmic side. Cysteines 100 and 126 form a disulfide. A helical transmembrane segment spans residues 141-159 (WSLLAFLLLAVLPLSCLLA). At 160–168 (YRFRTLART) the chain is on the cytoplasmic side.

The protein belongs to the DsbB family.

Its subcellular location is the cell inner membrane. Functionally, required for disulfide bond formation in some periplasmic proteins. Acts by oxidizing the DsbA protein. In Pseudomonas putida (strain ATCC 47054 / DSM 6125 / CFBP 8728 / NCIMB 11950 / KT2440), this protein is Disulfide bond formation protein B 2 (dsbB2).